We begin with the raw amino-acid sequence, 570 residues long: Ferroportin (570 aa).

The Cytoplasmic segment spans residues 1–23 (MTKSRDQTHQEGCCGSLANYLTS). Residues 24 to 53 (AKFLLYLGHSLSTWGDRMWHFAVSVFLVEL) form a helical membrane-spanning segment. The Fe cation site is built by Asp39 and His43. Residues 54-57 (YGNS) are Extracellular-facing. The chain crosses the membrane as a helical span at residues 58 to 84 (LLLTAVYGLVVAGSVLVLGAIIGDWVD). At 85–87 (KNA) the chain is on the cytoplasmic side. Residues 88–118 (RLKVAQTSLVVQNVSVILCGIILMMVFLHKN) form a helical membrane-spanning segment. Over 119–126 (ELLNMYHG) the chain is Extracellular. Residues 127 to 162 (WVLTVCYILIITIANIANLASTATAITIQRDWIVVV) traverse the membrane as a helical segment. Over 163–164 (AG) the chain is Cytoplasmic. A helical transmembrane segment spans residues 165–195 (ENRSRLADMNATIRRIDQLTNILAPMAVGQI). Over 196 to 202 (MTFGSPV) the chain is Extracellular. A helical transmembrane segment spans residues 203–229 (IGCGFISGWNLVSMCVEYFLLWKVYQK). Residues 230–306 (TPALAVKAAL…DGWVSYYNQP (77 aa)) are Cytoplasmic-facing. The helical transmembrane segment at 307 to 333 (VFLAGMGLAFLYMTVLGFDCITTGYAY) threads the bilayer. Residue Cys326 participates in Fe cation binding. Residues 334 to 338 (TQGLS) lie on the Extracellular side of the membrane. A helical membrane pass occupies residues 339–366 (GSILSVLMGASAITGIMGTVAFTWLRRK). Over 367-368 (CG) the chain is Cytoplasmic. Residues 369-391 (LVRTGLFSGLAQLSCLILCVISV) traverse the membrane as a helical segment. Over 392 to 452 (FMPGSPLDLS…EMSTKSVPII (61 aa)) the chain is Extracellular. A helical transmembrane segment spans residues 453–482 (SVSLLFAGVIAARIGLWSFDLTVTQLLQEN). Residues 483 to 487 (VIESE) are Cytoplasmic-facing. Residues 488–512 (RGIINGVQNSMNYLLDLLHFIMVIL) form a helical membrane-spanning segment. His506 provides a ligand contact to Fe cation. At 513–515 (APN) the chain is on the extracellular side. A helical membrane pass occupies residues 516–541 (PEAFGLLVLISVSFVAMGHLMYFRFA). The Cytoplasmic portion of the chain corresponds to 542-570 (QKTLGNQIFVCAPDEKEVTDESQPNTSVV).

It belongs to the ferroportin (FP) (TC 2.A.100) family. SLC40A subfamily. Identified in a complex with STOM. Interacts with HAMP; affinity of the peptide hormone HAMP for SLC40A1 increases by 80-fold in the presence of iron and the interaction promotes SLC40A1 ubiquitination and degradation. Part of a complex composed of SLC40A1/ferroportin, TF/transferrin and HEPH/hephaestin that transfers iron from cells to transferrin. Post-translationally, polyubiquitinated by RNF217; leading to proteasomal degradation. Under conditions of high systemic iron levels, both the hormone peptide hepcidin/HAMP and holo(iron bound)-transferrin/TF induce the ubiquitination, internalization and proteasomal degradation of SLC40A1 to control iron release from cells.

It is found in the cell membrane. The protein resides in the basolateral cell membrane. It catalyses the reaction Fe(2+)(in) = Fe(2+)(out). During elevated serum iron levels, liver-derived hepcidin/HAMP negatively regulates cell surface SLC40A1 by inducing its ubiquitination, internalization, and degradation. Indeed, hepcidin/HAMP affinity towards ferroportin/SLC40A1 increases by 80-fold in the presence of iron. Transports Fe(2+) from the inside of a cell to the outside of the cell, playing a key role for maintaining systemic iron homeostasis. Transports iron from intestinal, splenic, hepatic cells, macrophages and erythrocytes into the blood to provide iron to other tissues. Controls therefore dietary iron uptake, iron recycling by macrophages and erythrocytes, and release of iron stores in hepatocytes. When iron is in excess in serum, circulating HAMP/hepcidin levels increase resulting in a degradation of SLC40A1, thus limiting the iron efflux to plasma. The protein is Ferroportin of Rattus norvegicus (Rat).